The chain runs to 423 residues: Glutamate-1-semialdehyde 2,1-aminomutase (423 aa).

The residue at position 262 (K262) is an N6-(pyridoxal phosphate)lysine.

It belongs to the class-III pyridoxal-phosphate-dependent aminotransferase family. HemL subfamily. It depends on pyridoxal 5'-phosphate as a cofactor.

It is found in the cytoplasm. It catalyses the reaction (S)-4-amino-5-oxopentanoate = 5-aminolevulinate. Its pathway is porphyrin-containing compound metabolism; protoporphyrin-IX biosynthesis; 5-aminolevulinate from L-glutamyl-tRNA(Glu): step 2/2. The sequence is that of Glutamate-1-semialdehyde 2,1-aminomutase from Methanosphaera stadtmanae (strain ATCC 43021 / DSM 3091 / JCM 11832 / MCB-3).